The chain runs to 168 residues: uncharacterized protein (168 aa).

4Fe-4S ferredoxin-type domains are found at residues 48 to 78 and 91 to 122; these read KIPKTVIEELCIGCEGCANVCPTKAIEMIPI and KIPKINPEKCVYCLYCHDFCPVFSVFNEISPI. Positions 58, 61, 64, 68, 100, 103, 106, and 110 each coordinate [4Fe-4S] cluster.

This is an uncharacterized protein from Methanocaldococcus jannaschii (strain ATCC 43067 / DSM 2661 / JAL-1 / JCM 10045 / NBRC 100440) (Methanococcus jannaschii).